The following is a 286-amino-acid chain: Flagellar filament 31.3 kDa core protein (286 aa).

The protein belongs to the bacterial flagellin family. The core of the flagellum consists of several antigenically related polypeptides. In terms of processing, glycosylated. Glycosylation is not essential for motility.

The protein resides in the periplasmic flagellum. Its subcellular location is the periplasm. Functionally, component of the core of the flagella. This chain is Flagellar filament 31.3 kDa core protein (flaB2), found in Treponema maltophilum.